The primary structure comprises 179 residues: Large ribosomal subunit protein uL5 (179 aa).

This sequence belongs to the universal ribosomal protein uL5 family. Part of the 50S ribosomal subunit; part of the 5S rRNA/L5/L18/L25 subcomplex. Contacts the 5S rRNA and the P site tRNA. Forms a bridge to the 30S subunit in the 70S ribosome.

This is one of the proteins that bind and probably mediate the attachment of the 5S RNA into the large ribosomal subunit, where it forms part of the central protuberance. In the 70S ribosome it contacts protein S13 of the 30S subunit (bridge B1b), connecting the 2 subunits; this bridge is implicated in subunit movement. Contacts the P site tRNA; the 5S rRNA and some of its associated proteins might help stabilize positioning of ribosome-bound tRNAs. The protein is Large ribosomal subunit protein uL5 of Staphylococcus epidermidis (strain ATCC 35984 / DSM 28319 / BCRC 17069 / CCUG 31568 / BM 3577 / RP62A).